The sequence spans 635 residues: MEWDSDSEGSGDEEEEEEEEEEEGVEVGGGGDGGVGVGVGGGFALAIEGVLGACGLVVSDALEPDFPIIYVNRGFEDATGYRAEEVLGRNCRFLQCRGPFAKRRHPLVDTTVVTDIRRCLEEGTVFQGDLLNFRKDGSPFMAKLQLTPIYGDDETITHYMGMQFFNDSNVDLGPLSVSTTKEIVRSTLITPDNTIRPSPMGKGFCSEHSDLFLLSDEVLCQKILSRLSPRDIASVNSVCKRLYHLTRNDDLWRMVCQNAWGSEATQVLETVAGTRSLAWGRLARELTTLEAVTWRKLTVGGAVEPSRCNFSACAAGNRVVLFGGEGVNMQPMNDTFVLDLNASKPEWRHINVRSAPPGRWGHTLSCLNGSRLVLFGGCGRQGLLNDVFMLDLDAQQPTWREIPGLAPPVPRSWHSSCTLDGTKLVVSGGCADSGVLLSDTYLLDVTMERPVWREIPASWTPPCRLGHSLSVYDGRKILMFGGLAKSGPLRLRSNDVFTLDLSENKPCWRCITGSGMPGASNPAGVGPPPRLDHVAVSLPGGRILIFGGSVAGLHSASKLYLLDPTEEKPTWRILNVPGRPPRFAWGHSTCVVGGTKAIVLGGQTGEEWTLTELHELSLMFPTLNQKDLELYSWKL.

The span at 1–25 (MEWDSDSEGSGDEEEEEEEEEEEGV) shows a compositional bias: acidic residues. Residues 1-32 (MEWDSDSEGSGDEEEEEEEEEEEGVEVGGGGD) form a disordered region. Positions 44–123 (ALAIEGVLGA…TDIRRCLEEG (80 aa)) constitute a PAS domain. Residue C91 is modified to S-4a-FMN cysteine. The F-box domain maps to 209 to 255 (SDLFLLSDEVLCQKILSRLSPRDIASVNSVCKRLYHLTRNDDLWRMV). Kelch repeat units lie at residues 371-421 (RLVL…TLDG), 423-474 (KLVV…VYDG), 476-530 (KILM…PPPR), and 542-594 (RILI…VVGG).

Belongs to the ADAGIO family. Post-translationally, FMN binds covalently to cysteine after exposure to blue light and is reversed in the dark.

The protein localises to the nucleus. The protein operates within protein modification; protein ubiquitination. In terms of biological role, component of an E3 ubiquitin ligase complex that plays a central role in blue light-dependent circadian cycles. Acts as a blue light photoreceptor, due to the presence of FMN, that mediates light-regulated protein degradation of critical clock components by targeting them to the proteasome complex. This is Putative adagio-like protein 2 from Oryza sativa subsp. japonica (Rice).